The chain runs to 174 residues: Protein RESISTANCE TO POWDERY MILDEW 8.2 (174 aa).

The RPW8 domain occupies 1–153; it reads MIAEVAAGGA…IMPQPKFEIH (153 aa). The chain crosses the membrane as a helical span at residues 7–23; that stretch reads AGGALGLALSVLHEAVK. Positions 68–145 form a coiled coil; it reads VNKRLKLLLE…EISTKLDKIM (78 aa).

Belongs to the plant RPW8 protein family.

Its subcellular location is the membrane. Functionally, disease resistance (R) protein that induces localized, salicylic acid-dependent defenses. Confers resistance to powdery mildew (e.g. Erysiphe cichoracearum UCSC1). The polypeptide is Protein RESISTANCE TO POWDERY MILDEW 8.2 (Arabidopsis thaliana (Mouse-ear cress)).